A 116-amino-acid chain; its full sequence is Large ribosomal subunit protein bL17 (116 aa).

The protein belongs to the bacterial ribosomal protein bL17 family. Part of the 50S ribosomal subunit. Contacts protein L32.

This Sulfurimonas denitrificans (strain ATCC 33889 / DSM 1251) (Thiomicrospira denitrificans (strain ATCC 33889 / DSM 1251)) protein is Large ribosomal subunit protein bL17.